The chain runs to 257 residues: Methylthioribulose-1-phosphate dehydratase (257 aa).

Cysteine 107 is a binding site for substrate. Zn(2+) contacts are provided by histidine 125 and histidine 127. The Proton donor/acceptor role is filled by glutamate 148. Histidine 210 contacts Zn(2+).

The protein belongs to the aldolase class II family. MtnB subfamily. Zn(2+) is required as a cofactor.

The protein localises to the cytoplasm. It carries out the reaction 5-(methylsulfanyl)-D-ribulose 1-phosphate = 5-methylsulfanyl-2,3-dioxopentyl phosphate + H2O. Its pathway is amino-acid biosynthesis; L-methionine biosynthesis via salvage pathway; L-methionine from S-methyl-5-thio-alpha-D-ribose 1-phosphate: step 2/6. Its function is as follows. Catalyzes the dehydration of methylthioribulose-1-phosphate (MTRu-1-P) into 2,3-diketo-5-methylthiopentyl-1-phosphate (DK-MTP-1-P). This chain is Methylthioribulose-1-phosphate dehydratase, found in Lachancea thermotolerans (strain ATCC 56472 / CBS 6340 / NRRL Y-8284) (Yeast).